Reading from the N-terminus, the 730-residue chain is Wall-associated receptor kinase-like 1 (730 aa).

The N-terminal stretch at 1–25 (MKTKTSIFQFIVASVLTLLINDSSA) is a signal peptide. The Extracellular segment spans residues 26–358 (ATPPPPISNS…KPTKPPVLQG (333 aa)). Asn-34, Asn-40, Asn-70, Asn-77, Asn-92, Asn-119, Asn-132, Asn-211, Asn-233, Asn-269, and Asn-281 each carry an N-linked (GlcNAc...) asparagine glycan. Residues 282 to 341 (CSCEYDYFSGMSYRNCYCDYGYTGNPYLRGGCVDTDSCEGNHNCGEDAHCVNMPGPMSMC) form an atypical EGF-like region. 3 cysteine pairs are disulfide-bonded: Cys-284–Cys-297, Cys-319–Cys-331, and Cys-325–Cys-341. A helical membrane pass occupies residues 359 to 379 (ILIGLSGLVFFVGLFWLFKLI). Residues 380 to 730 (KKRRNINRSK…DQPMAINNKR (351 aa)) lie on the Cytoplasmic side of the membrane. The Protein kinase domain maps to 429 to 702 (FSIDRVLGQG…KEVSNELERI (274 aa)). ATP is bound by residues 435–443 (LGQGGQGTV) and Lys-457. Residue Tyr-502 is modified to Phosphotyrosine. Asp-554 functions as the Proton acceptor in the catalytic mechanism. Phosphothreonine occurs at positions 588 and 593. Tyr-601 is modified (phosphotyrosine). Positions 685 to 730 (KGKNRPNMKEVSNELERIRSSPEDLDVRTENEDEEEDQPMAINNKR) are disordered. A compositionally biased stretch (basic and acidic residues) spans 691-714 (NMKEVSNELERIRSSPEDLDVRTE).

Belongs to the protein kinase superfamily. Ser/Thr protein kinase family. Preferentially expressed in roots and flowers.

It localises to the membrane. The catalysed reaction is L-seryl-[protein] + ATP = O-phospho-L-seryl-[protein] + ADP + H(+). The enzyme catalyses L-threonyl-[protein] + ATP = O-phospho-L-threonyl-[protein] + ADP + H(+). In terms of biological role, serine/threonine-protein kinase that may function as a signaling receptor of extracellular matrix component. The chain is Wall-associated receptor kinase-like 1 (WAKL1) from Arabidopsis thaliana (Mouse-ear cress).